A 360-amino-acid chain; its full sequence is Peptide chain release factor 1 (360 aa).

Residue Gln-235 is modified to N5-methylglutamine. The segment at 284 to 313 is disordered; sequence AKRQQAEASTRRNLLGSGDRSDRNRTYNFP.

It belongs to the prokaryotic/mitochondrial release factor family. Methylated by PrmC. Methylation increases the termination efficiency of RF1.

The protein resides in the cytoplasm. In terms of biological role, peptide chain release factor 1 directs the termination of translation in response to the peptide chain termination codons UAG and UAA. The chain is Peptide chain release factor 1 from Salmonella agona (strain SL483).